Reading from the N-terminus, the 348-residue chain is GTPase Obg (348 aa).

An Obg domain is found at Met-1 to Ile-159. In terms of domain architecture, OBG-type G spans Ala-160–Asp-327. GTP-binding positions include Gly-166–Ser-173, Phe-191–His-195, Asp-212–Gly-215, Ser-279–Asp-282, and Ser-308–Ala-310. 2 residues coordinate Mg(2+): Ser-173 and Thr-193.

Belongs to the TRAFAC class OBG-HflX-like GTPase superfamily. OBG GTPase family. Monomer. The cofactor is Mg(2+).

Its subcellular location is the cytoplasm. In terms of biological role, an essential GTPase which binds GTP, GDP and possibly (p)ppGpp with moderate affinity, with high nucleotide exchange rates and a fairly low GTP hydrolysis rate. Plays a role in control of the cell cycle, stress response, ribosome biogenesis and in those bacteria that undergo differentiation, in morphogenesis control. The polypeptide is GTPase Obg (Beijerinckia indica subsp. indica (strain ATCC 9039 / DSM 1715 / NCIMB 8712)).